The sequence spans 737 residues: MTDSPDATTGGCPVAHGDRLPHPTQGGANTHWWPNRLNLKLLAKNPAVADPMGEEFDYAAEFKTLDLPAVKADIQEVLTTSQDWWPADFGHYGPLMIRMAWHSAGTYRVSDGRGGAGTGQQRFAPLNSWPDNVSLDKARRLLWPVKQKYGRKLSWADLMILAGNVALESMGFETFGFAGGRVDAWEPEDDVYWGAETTWLGSDQRISGGEQRELEKPLGATHMGLIYVNPEGPEGKPDPVAAARDIRETFGRMAMNDEETVALIAGGHTFGKTHGAAPDSNLGPDSEAAPLEAQGLGWHNSHGTGKGADTITSGLEVTWTSTPTQWSNGFFENLFGYEYELYQGPGGGWQWRPKDGAGEGTVPDAHDPSKKIAPNMLTTDLSLKVDPIYEPISRRFWENPQEFADAFARAWFKLTHRDMGPADRYLGPEVPSEELIWQDPIPKPDHELVGPAEIAELKGRIAESGLTVRQLVSTAWAAASTFRGSDKRGGANGGRIRLEPQRSWEVNEPDQLATVISTLEGIQESFNAGSGAKKVSFADLVVLAGGVGVEQAAQAAGFDVEVPFTPGRGDATAEQTDVESFSHLEPSSDGFRNYLGKGHPLPAEYQLVDKANLLTLSAPEMTVLVGGLRVLGANYQQSEQGVFTEKPGTLTNDFFVNLLQMGNTWKATDETSETFEATDASGQVKWTGTRFDLVFGSNSELRAVAEVYASDDAKEKFVRDFVAAWDKVMNLDRFDLA.

A disordered region spans residues 1–29 (MTDSPDATTGGCPVAHGDRLPHPTQGGAN). The tryptophyl-tyrosyl-methioninium (Trp-Tyr) (with M-253) cross-link spans 101–227 (WHSAGTYRVS…LGATHMGLIY (127 aa)). Residue His102 is the Proton acceptor of the active site. A cross-link (tryptophyl-tyrosyl-methioninium (Tyr-Met) (with W-101)) is located at residues 227 to 253 (YVNPEGPEGKPDPVAAARDIRETFGRM). His268 is a binding site for heme b.

It belongs to the peroxidase family. Peroxidase/catalase subfamily. Homodimer or homotetramer. Heme b is required as a cofactor. Formation of the three residue Trp-Tyr-Met cross-link is important for the catalase, but not the peroxidase activity of the enzyme.

It carries out the reaction H2O2 + AH2 = A + 2 H2O. It catalyses the reaction 2 H2O2 = O2 + 2 H2O. Functionally, bifunctional enzyme with both catalase and broad-spectrum peroxidase activity. The sequence is that of Catalase-peroxidase from Saccharopolyspora erythraea (strain ATCC 11635 / DSM 40517 / JCM 4748 / NBRC 13426 / NCIMB 8594 / NRRL 2338).